Consider the following 290-residue polypeptide: 4-hydroxy-tetrahydrodipicolinate synthase (290 aa).

Thr-44 serves as a coordination point for pyruvate. The Proton donor/acceptor role is filled by Tyr-132. Residue Lys-160 is the Schiff-base intermediate with substrate of the active site. Position 202 (Ile-202) interacts with pyruvate.

This sequence belongs to the DapA family. In terms of assembly, homotetramer; dimer of dimers.

The protein resides in the cytoplasm. It carries out the reaction L-aspartate 4-semialdehyde + pyruvate = (2S,4S)-4-hydroxy-2,3,4,5-tetrahydrodipicolinate + H2O + H(+). Its pathway is amino-acid biosynthesis; L-lysine biosynthesis via DAP pathway; (S)-tetrahydrodipicolinate from L-aspartate: step 3/4. Its function is as follows. Catalyzes the condensation of (S)-aspartate-beta-semialdehyde [(S)-ASA] and pyruvate to 4-hydroxy-tetrahydrodipicolinate (HTPA). In Geotalea daltonii (strain DSM 22248 / JCM 15807 / FRC-32) (Geobacter daltonii), this protein is 4-hydroxy-tetrahydrodipicolinate synthase.